Reading from the N-terminus, the 3147-residue chain is Bassianolide nonribosomal cyclodepsipeptide synthetase (3147 aa).

Over residues 1 to 12 (MEPPNNANTGQL) the composition is skewed to polar residues. The tract at residues 1 to 23 (MEPPNNANTGQLGPTLPNGTVDL) is disordered. Residues 69 to 454 (HVVYEIPEDV…INKLQSTDGS (386 aa)) form a condensation 1 region. The tract at residues 495–887 (DDTPNKPAVC…GRMDSQVKIR (393 aa)) is adenylation 1. The region spanning 1015–1091 (PDASAGVTKL…SLQAAIGGSS (77 aa)) is the Carrier 1 domain. Ser1052 is modified (O-(pantetheine 4'-phosphoryl)serine). The segment at 1109 to 1538 (SYSQGRLWFL…QTLISVVPLT (430 aa)) is condensation 2. Residues 1567–1973 (FATQVASYPD…GRMDFQFKIR (407 aa)) form an adenylation 2 region. An S-adenosyl-L-methionine-dependent N-methyltransferase (MT) region spans residues 2041–2181 (TYTELDTVSS…FPTRDYLEQV (141 aa)). Carrier domains are found at residues 2515–2589 (FPLS…RQQL) and 2615–2689 (APTT…EVSQ). 2 positions are modified to O-(pantetheine 4'-phosphoryl)serine: Ser2549 and Ser2649. Residues 2735–3139 (QDVYLATHLQ…THLMEQVCNT (405 aa)) are condensation 3.

The protein belongs to the NRP synthetase family.

Functionally, bassianolide nonribosomal synthetase that mediates the biosynthesis of bassianolide (BSL), a non-ribosomal cyclodepsipeptide that shows insecticidal and cancer cell antiproliferative activity. BSLS first catalyzes the iterative synthesis of an enzyme-bound dipeptidol monomer intermediate from D-2-hydroxyisovalerate and L-leucine before performing the condensation and cyclization of 4 dipeptidol monomers to yield the cyclic tetrameric ester bassianolide. The N-methyltransferase MT domain is responsible for the methylation of the leucine residues of bassianolide. BSLS is flexible with both the amino acid and hydroxyl acid precursors, and produces bassianolide as the major product (containing N-methyl-L-Leu), together with small amounts of beauvericin and its analogs beauvericins A-C (containing N-methyl-L-Phe). This chain is Bassianolide nonribosomal cyclodepsipeptide synthetase, found in Beauveria bassiana (strain ARSEF 2860) (White muscardine disease fungus).